A 1761-amino-acid polypeptide reads, in one-letter code: Nonribosomal peptide synthetase 6 (1761 aa).

The adenylation stretch occupies residues 63-468 (ERAALHPEKI…GRQDQQVKLR (406 aa)). In terms of domain architecture, Carrier 1 spans 600–675 (EATTEMELKL…SMAEKAKPVS (76 aa)). Serine 636 bears the O-(pantetheine 4'-phosphoryl)serine mark. A condensation 1 region spans residues 712-1135 (VEDVYPCTPL…AVLDPVEAQD (424 aa)). Carrier domains follow at residues 1169-1242 (SPNE…SNER) and 1237-1313 (SASN…EEET). 2 positions are modified to O-(pantetheine 4'-phosphoryl)serine: serine 1203 and serine 1274. Residues 1354-1677 (IYPTRPLQQL…ESVQWFDTVV (324 aa)) form a condensation 2 region.

The protein belongs to the NRP synthetase family.

Its pathway is siderophore biosynthesis. Its function is as follows. Nonribosomal peptide synthetase; part of the gene cluster that mediates the biosynthesis of hydroxamate-containing siderophores that play a critical role in virulence. Cochliobolus heterostrophus produces extracellular coprogen-type siderophores including coprogen, neocoprogen I and neocoprogen II, as well as the intracellular siderophore ferricrocin. The role of extracellular siderophores is to supply iron to the fungus during plant infection, and the intracellular ferricrocin is required for intracellular iron distribution and storage with a crucial role in ascus and ascospore development. SIDA2 catalyzes the conversion of L-ornithine to N(5)-hydroxyornithine, the first step in the biosynthesis of all hydroxamate-containing siderophores. The assembly of extracellular coprogen-type siderophores is then performed by the nonribosomal peptide synthetase (NRPS) NPS6 whereas the intracellular siderophore ferricrocin is assembled by NPS2. The sequence is that of Nonribosomal peptide synthetase 6 from Cochliobolus heterostrophus (strain C4 / ATCC 48331 / race T) (Southern corn leaf blight fungus).